The primary structure comprises 79 residues: Small ribosomal subunit protein bS18c (79 aa).

It belongs to the bacterial ribosomal protein bS18 family. In terms of assembly, part of the 30S ribosomal subunit.

Its subcellular location is the plastid. The protein resides in the chloroplast. This chain is Small ribosomal subunit protein bS18c, found in Chaetosphaeridium globosum (Charophycean green alga).